A 230-amino-acid chain; its full sequence is Large ribosomal subunit protein uL1 (230 aa).

The protein belongs to the universal ribosomal protein uL1 family. In terms of assembly, part of the 50S ribosomal subunit.

Functionally, binds directly to 23S rRNA. The L1 stalk is quite mobile in the ribosome, and is involved in E site tRNA release. Its function is as follows. Protein L1 is also a translational repressor protein, it controls the translation of the L11 operon by binding to its mRNA. The polypeptide is Large ribosomal subunit protein uL1 (Acidiphilium cryptum (strain JF-5)).